The primary structure comprises 744 residues: Receptor-like serine/threonine-protein kinase ALE2 (744 aa).

Positions 1–19 are cleaved as a signal peptide; it reads MRNFAMLLLLILLLHSLAS. At 20-260 the chain is on the extracellular side; the sequence is FPICFARLFP…SQGIGFRTIA (241 aa). Residues 59 to 68 show a composition bias toward pro residues; the sequence is PAFSPNPSRI. The interval 59-79 is disordered; it reads PAFSPNPSRIPPLRHKGHHRH. The span at 70 to 79 shows a compositional bias: basic residues; the sequence is PLRHKGHHRH. N-linked (GlcNAc...) asparagine glycans are attached at residues asparagine 87, asparagine 186, asparagine 204, asparagine 243, and asparagine 249. A helical transmembrane segment spans residues 261 to 281; the sequence is IIALSGFVLILVLVGAISIIV. Over 282–744 the chain is Cytoplasmic; that stretch reads KWKKIGKSSN…HLWSGNGDWL (463 aa). A Protein kinase domain is found at 349–619; that stretch reads FSAKRVLGEG…GEVVQALKLI (271 aa). ATP-binding positions include 355–363 and lysine 377; that span reads LGEGGFGRV. The active-site Proton acceptor is aspartate 470. Disordered stretches follow at residues 681 to 705 and 722 to 744; these read EDME…PNRS and GSMS…GDWL.

This sequence belongs to the protein kinase superfamily. Ser/Thr protein kinase family. In terms of processing, autophosphorylated and phosphorylated by ACR4.

Its subcellular location is the cell membrane. The catalysed reaction is L-seryl-[protein] + ATP = O-phospho-L-seryl-[protein] + ADP + H(+). It carries out the reaction L-threonyl-[protein] + ATP = O-phospho-L-threonyl-[protein] + ADP + H(+). Required during the differentiation of the protoderm into shoots epidermis and cuticle. The sequence is that of Receptor-like serine/threonine-protein kinase ALE2 (ALE2) from Arabidopsis thaliana (Mouse-ear cress).